The sequence spans 450 residues: Phosphoglucosamine mutase (450 aa).

S102 serves as the catalytic Phosphoserine intermediate. The Mg(2+) site is built by S102, D244, D246, and D248. S102 bears the Phosphoserine mark.

It belongs to the phosphohexose mutase family. It depends on Mg(2+) as a cofactor. In terms of processing, activated by phosphorylation.

It carries out the reaction alpha-D-glucosamine 1-phosphate = D-glucosamine 6-phosphate. Its function is as follows. Catalyzes the conversion of glucosamine-6-phosphate to glucosamine-1-phosphate. The chain is Phosphoglucosamine mutase from Desulfovibrio desulfuricans (strain ATCC 27774 / DSM 6949 / MB).